The chain runs to 358 residues: 1-deoxy-D-xylulose 5-phosphate reductoisomerase (358 aa).

The NADPH site is built by T7, G8, S9, I10, G31, N33, and N114. K115 contacts 1-deoxy-D-xylulose 5-phosphate. Position 116 (E116) interacts with NADPH. D134 is a Mn(2+) binding site. Positions 135, 136, 157, and 180 each coordinate 1-deoxy-D-xylulose 5-phosphate. E136 contributes to the Mn(2+) binding site. G186 serves as a coordination point for NADPH. 1-deoxy-D-xylulose 5-phosphate-binding residues include S193, N198, K199, and E202. E202 contributes to the Mn(2+) binding site.

The protein belongs to the DXR family. The cofactor is Mg(2+). Mn(2+) is required as a cofactor.

The catalysed reaction is 2-C-methyl-D-erythritol 4-phosphate + NADP(+) = 1-deoxy-D-xylulose 5-phosphate + NADPH + H(+). It functions in the pathway isoprenoid biosynthesis; isopentenyl diphosphate biosynthesis via DXP pathway; isopentenyl diphosphate from 1-deoxy-D-xylulose 5-phosphate: step 1/6. Its function is as follows. Catalyzes the NADPH-dependent rearrangement and reduction of 1-deoxy-D-xylulose-5-phosphate (DXP) to 2-C-methyl-D-erythritol 4-phosphate (MEP). This is 1-deoxy-D-xylulose 5-phosphate reductoisomerase from Wolinella succinogenes (strain ATCC 29543 / DSM 1740 / CCUG 13145 / JCM 31913 / LMG 7466 / NCTC 11488 / FDC 602W) (Vibrio succinogenes).